Consider the following 198-residue polypeptide: RNA 2',3'-cyclic phosphodiesterase (198 aa).

Catalysis depends on histidine 39, which acts as the Proton donor. Short sequence motifs (HXTX) lie at residues 39-42 (HLTL) and 130-133 (HITL). Catalysis depends on histidine 130, which acts as the Proton acceptor.

This sequence belongs to the 2H phosphoesterase superfamily. ThpR family.

It carries out the reaction a 3'-end 2',3'-cyclophospho-ribonucleotide-RNA + H2O = a 3'-end 2'-phospho-ribonucleotide-RNA + H(+). Functionally, hydrolyzes RNA 2',3'-cyclic phosphodiester to an RNA 2'-phosphomonoester. The protein is RNA 2',3'-cyclic phosphodiesterase of Thermus thermophilus (strain ATCC 27634 / DSM 579 / HB8).